We begin with the raw amino-acid sequence, 260 residues long: Small ribosomal subunit protein uS2 (260 aa).

Residues 223–260 (EGRQGEDEEEASQEVAEGVSKDSLEDLKKSVEEGSNEE) are disordered. Residues 241–254 (VSKDSLEDLKKSVE) are compositionally biased toward basic and acidic residues.

The protein belongs to the universal ribosomal protein uS2 family.

The sequence is that of Small ribosomal subunit protein uS2 from Pediococcus pentosaceus (strain ATCC 25745 / CCUG 21536 / LMG 10740 / 183-1w).